The chain runs to 453 residues: Tubulin delta chain (453 aa).

Residue 143-149 (AGGTGSG) participates in GTP binding.

It belongs to the tubulin family. As to quaternary structure, found in a complex with TEDC1, TEDC2, TUBE1 and TUBD1.

It is found in the nucleus. It localises to the cytoplasm. Its subcellular location is the cytoskeleton. The protein resides in the microtubule organizing center. The protein localises to the centrosome. It is found in the centriole. It localises to the cell projection. Its subcellular location is the cilium. Its function is as follows. Acts as a positive regulator of hedgehog signaling and regulates ciliary function. This chain is Tubulin delta chain (TUBD1), found in Homo sapiens (Human).